Reading from the N-terminus, the 162-residue chain is Heat shock protein beta-6 (162 aa).

Residues 1 to 72 (MEIRVPVQPS…PTAQVPTDPG (72 aa)) form an involved in stabilization of the HSPB1:HSBP6 heterodimer region. Serine 16 carries the phosphoserine modification. Residue glutamine 31 forms an Isoglutamyl lysine isopeptide (Gln-Lys) (interchain with K-162) linkage. The sHSP domain maps to 56-162 (RAPSVALPTA…ASLPSPPAAK (107 aa)). Deamidated glutamine is present on glutamine 66. At serine 157 the chain carries Phosphoserine. Lysine 162 is covalently cross-linked (Isoglutamyl lysine isopeptide (Lys-Gln) (interchain with Q-31)).

The protein belongs to the small heat shock protein (HSP20) family. As to quaternary structure, homodimer. Small heat shock proteins form high molecular mass oligomers containing variable number of monomers; these oligomers display a very flexible quaternary structure easily exchanging their subunits. Heterooligomer with HSPB1; formed through oligomerization of HSPB1:HSBP6 dimers; subunit exchange leads to formation of at least two different heterooligomeric complexes, differing in variable quantities of HSPB1 and HSPB6 homodimers in addition to HSPB1:HSPB6 heterodimers. Heterooligomer with CRYAB; large heterooligomers consist of CRYAB homodimers and HSPB5:HSPB6 heterodimers but lacking HSPB6 homodimers. Interacts with BAG3. Interacts (phosphorylated) with YWHAZ. Interacts with PDE4A and PDE4D; required for maintenance of the non-phosphorylated state of HSPB6 under basal conditions. Interacts with KDR. Interacts with PRKD1. The N-terminus is blocked. Post-translationally, phosphorylated at Ser-16 by PKA and probably PKD1K; required to protect cardiomyocytes from apoptosis. In terms of tissue distribution, widely expressed. High expression in muscle tissues.

The protein resides in the cytoplasm. Its subcellular location is the nucleus. It localises to the secreted. Small heat shock protein which functions as a molecular chaperone probably maintaining denatured proteins in a folding-competent state. Seems to have versatile functions in various biological processes. Plays a role in regulating muscle function such as smooth muscle vasorelaxation and cardiac myocyte contractility. May regulate myocardial angiogenesis implicating KDR. Overexpression mediates cardioprotection and angiogenesis after induced damage. Stabilizes monomeric YWHAZ thereby supporting YWHAZ chaperone-like activity. The protein is Heat shock protein beta-6 (Hspb6) of Rattus norvegicus (Rat).